The sequence spans 182 residues: Putative manganese efflux pump MntP (182 aa).

Transmembrane regions (helical) follow at residues leucine 6–glycine 26, isoleucine 37–valine 57, histidine 71–leucine 91, isoleucine 101–leucine 121, isoleucine 131–isoleucine 151, and tyrosine 162–isoleucine 182.

It belongs to the MntP (TC 9.B.29) family.

It is found in the cell membrane. Its function is as follows. Probably functions as a manganese efflux pump. This chain is Putative manganese efflux pump MntP, found in Bacillus cereus (strain ATCC 10987 / NRS 248).